The primary structure comprises 220 residues: Tumor protein D54 (220 aa).

M1 carries the N-acetylmethionine modification. Residues 1-14 show a composition bias toward polar residues; sequence MDSASQDINLNSPN. The disordered stretch occupies residues 1–26; the sequence is MDSASQDINLNSPNKGVLSDFMTDVP. Residues S3, S12, and S19 each carry the phosphoserine modification. The stretch at 40-82 forms a coiled coil; it reads GLTEVEEEELRAELAKVEEEIVTLRQVLAAKERHCGELKRRLG. A phosphoserine mark is found at S96, S149, S168, and S175. Phosphothreonine is present on T177. S180 bears the Phosphoserine mark. T187 carries the post-translational modification Phosphothreonine. Residues 189-220 are disordered; it reads KSKVVGGRENGSDTLPSSPGSGDQTLPDHAPF. The segment covering 200–212 has biased composition (polar residues); the sequence is SDTLPSSPGSGDQ. Phosphoserine is present on residues S206 and S209.

This sequence belongs to the TPD52 family. In terms of assembly, forms a homodimer or heterodimer with other members of the family. Interacts with MAL2.

This Rattus norvegicus (Rat) protein is Tumor protein D54 (Tpd52l2).